The following is a 92-amino-acid chain: MTRSLKKNPFVANHLLAKIEKLNMREEKETIVTWSRASTIIPTMIGHTIAIHNGKEHLPIFITDRMVGHKLGEFAPTLTFRGHARTDTRSRR.

Belongs to the universal ribosomal protein uS19 family.

Its subcellular location is the plastid. It is found in the chloroplast. Functionally, protein S19 forms a complex with S13 that binds strongly to the 16S ribosomal RNA. In Calycanthus floridus var. glaucus (Eastern sweetshrub), this protein is Small ribosomal subunit protein uS19c.